A 520-amino-acid polypeptide reads, in one-letter code: Cholesterol side-chain cleavage enzyme, mitochondrial (520 aa).

The N-terminal 36 residues, Met1–Asn36, are a transit peptide targeting the mitochondrion. Cys458 is a heme binding site.

The protein belongs to the cytochrome P450 family. Interacts with FDX1/adrenodoxin. It depends on heme as a cofactor.

The protein localises to the mitochondrion inner membrane. It catalyses the reaction 6 reduced [adrenodoxin] + cholesterol + 3 O2 + 6 H(+) = 4-methylpentanal + pregnenolone + 6 oxidized [adrenodoxin] + 4 H2O. The enzyme catalyses 2 reduced [adrenodoxin] + cholesterol + O2 + 2 H(+) = (22R)-hydroxycholesterol + 2 oxidized [adrenodoxin] + H2O. It carries out the reaction (22R)-hydroxycholesterol + 2 reduced [adrenodoxin] + O2 + 2 H(+) = (20R,22R)-20,22-dihydroxycholesterol + 2 oxidized [adrenodoxin] + H2O. The catalysed reaction is (20R,22R)-20,22-dihydroxycholesterol + 2 reduced [adrenodoxin] + O2 + 2 H(+) = 4-methylpentanal + pregnenolone + 2 oxidized [adrenodoxin] + 2 H2O. It functions in the pathway lipid metabolism; C21-steroid hormone metabolism. It participates in steroid metabolism; cholesterol metabolism. Its function is as follows. A cytochrome P450 monooxygenase that catalyzes the side-chain hydroxylation and cleavage of cholesterol to pregnenolone, the precursor of most steroid hormones. Catalyzes three sequential oxidation reactions of cholesterol, namely the hydroxylation at C22 followed with the hydroxylation at C20 to yield 20R,22R-hydroxycholesterol that is further cleaved between C20 and C22 to yield the C21-steroid pregnenolone and 4-methylpentanal. Mechanistically, uses molecular oxygen inserting one oxygen atom into a substrate and reducing the second into a water molecule. Two electrons are provided by NADPH via a two-protein mitochondrial transfer system comprising flavoprotein FDXR (adrenodoxin/ferredoxin reductase) and nonheme iron-sulfur protein FDX1 or FDX2 (adrenodoxin/ferredoxin). The protein is Cholesterol side-chain cleavage enzyme, mitochondrial (CYP11A1) of Mesocricetus auratus (Golden hamster).